A 459-amino-acid polypeptide reads, in one-letter code: Alcohol acyl transferase 2 (459 aa).

Active-site proton acceptor residues include His-164 and Asn-385.

The protein belongs to the plant acyltransferase family. Highly expressed in the cortex and skin of ripe fruit.

Functionally, involved in the biosynthesis of volatile esters which confer ripe apple fruit flavor. Alcohol acyl transferase that can use a wide range of alcohols as substrate to produce esters. In Malus domestica (Apple), this protein is Alcohol acyl transferase 2.